A 282-amino-acid chain; its full sequence is Ammonia transport outward protein 2 (282 aa).

The disordered stretch occupies residues 1-34 (MSDREQSSGNTAFENPKALDSSEGEFISENNDQS). Serine 2 carries the post-translational modification N-acetylserine. Residues serine 2, serine 7, serine 21, serine 22, serine 28, and serine 40 each carry the phosphoserine modification. The Extracellular segment spans residues 2-86 (SDREQSSGNT…GLAPAPVHKF (85 aa)). A helical transmembrane segment spans residues 87–107 (ANPAPLGLSGFALTTFVLSMF). Residues 108–119 (NARAQGITIPNV) lie on the Cytoplasmic side of the membrane. The helical transmembrane segment at 120-140 (VVGCAMFYGGLVQLIAGIWEI) threads the bilayer. The Extracellular segment spans residues 141-150 (ALENTFGGTA). Residues 151–171 (LCSFGGFWLSFGAIYIPWFGI) traverse the membrane as a helical segment. Over 172 to 184 (LDAYKDKESDLGN) the chain is Cytoplasmic. A helical membrane pass occupies residues 185–205 (ALGFYLLGWALFTFGLSVCTM). Topologically, residues 206–207 (KS) are extracellular. Residues 208–228 (TIMFFALFFLLAVTFLLLSIA) form a helical membrane-spanning segment. Over 229-238 (NFTGEVGVTR) the chain is Cytoplasmic. The helical transmembrane segment at 239 to 259 (AGGVLGVIVAFIAWYNAYAGI) threads the bilayer. At 260–282 (ATRQNSYIMVHPFALPSNDKVFF) the chain is on the extracellular side.

The protein belongs to the acetate uptake transporter (AceTr) (TC 2.A.96) family.

Its subcellular location is the cell membrane. Functionally, transporter protein required for ammonia export. Involved in acetate resistance. The sequence is that of Ammonia transport outward protein 2 (ATO2) from Saccharomyces cerevisiae (strain ATCC 204508 / S288c) (Baker's yeast).